Here is a 297-residue protein sequence, read N- to C-terminus: Phosphoribosylaminoimidazole-succinocarboxamide synthase (297 aa).

It belongs to the SAICAR synthetase family.

The catalysed reaction is 5-amino-1-(5-phospho-D-ribosyl)imidazole-4-carboxylate + L-aspartate + ATP = (2S)-2-[5-amino-1-(5-phospho-beta-D-ribosyl)imidazole-4-carboxamido]succinate + ADP + phosphate + 2 H(+). The protein operates within purine metabolism; IMP biosynthesis via de novo pathway; 5-amino-1-(5-phospho-D-ribosyl)imidazole-4-carboxamide from 5-amino-1-(5-phospho-D-ribosyl)imidazole-4-carboxylate: step 1/2. The protein is Phosphoribosylaminoimidazole-succinocarboxamide synthase of Mycobacteroides abscessus (strain ATCC 19977 / DSM 44196 / CCUG 20993 / CIP 104536 / JCM 13569 / NCTC 13031 / TMC 1543 / L948) (Mycobacterium abscessus).